The sequence spans 415 residues: F-box protein At3g13820 (415 aa).

The F-box domain maps to 1-50 (MTTMSNLPAEVLEEILSRTPVTSLRTMRSTCKKWNNLSKKKIIPEAARKQ). Disordered regions lie at residues 209 to 229 (NDYDDQEDEEEEDDEEYEDDD) and 387 to 415 (KQPKGKRKGRSSETKSNKNKKGRKIKIIG). The segment covering 210–229 (DYDDQEDEEEEDDEEYEDDD) has biased composition (acidic residues). Residues 403–415 (NKNKKGRKIKIIG) show a composition bias toward basic residues.

The sequence is that of F-box protein At3g13820 from Arabidopsis thaliana (Mouse-ear cress).